Consider the following 707-residue polypeptide: uncharacterized protein (707 aa).

2 disordered regions span residues 15–122 (ALAK…LESY) and 667–707 (ESVQ…DIDE). Composition is skewed to basic and acidic residues over residues 18–32 (KKNDKIKKKDTDKGI) and 40–52 (EGKDETLKRDVEK). At Ser112 the chain carries Phosphoserine. A coiled-coil region spans residues 659–700 (EEQRKLIRESVQQDQEHKEQMRQKKKQALKSDDIELDDLSEE). The span at 692-707 (IELDDLSEEEAEDIDE) shows a compositional bias: acidic residues.

This sequence belongs to the NOC2 family.

Its subcellular location is the nucleus. The protein localises to the nucleolus. This is an uncharacterized protein from Schizosaccharomyces pombe (strain 972 / ATCC 24843) (Fission yeast).